The chain runs to 312 residues: MLQYQIDRIEHQVADDRAQTGVFLIGPLERGQATTLGNSLRRVLMGGLEGSAITAVRIAGVNHEYATIPGVREDVLDILLNCKQLSVNSRTSELEIGRLVVTGPAQVKAKDLQFSSQVQVVDGDRQIATVHEGHSLELEVHVERGIGYRPVDRHNEDVSAIDLLQIDAVFMPVRRVNFTIDETAVAEGGSTRERLRIEIVTDGSTTPDDALAESANQLIELFQPLATVTMVEEPGLEPEPSAESQIPLEELNLSVRAYNCLKRAQVNSVSDLMGFSYEDLLEIKNFGSKSADEVIEALERIGISIPQSRTSA.

The tract at residues M1 to T229 is alpha N-terminal domain (alpha-NTD). Positions Q245–A312 are alpha C-terminal domain (alpha-CTD).

Belongs to the RNA polymerase alpha chain family. As to quaternary structure, in cyanobacteria the RNAP catalytic core is composed of 2 alpha, 1 beta, 1 beta', 1 gamma and 1 omega subunit. When a sigma factor is associated with the core the holoenzyme is formed, which can initiate transcription.

It catalyses the reaction RNA(n) + a ribonucleoside 5'-triphosphate = RNA(n+1) + diphosphate. In terms of biological role, DNA-dependent RNA polymerase catalyzes the transcription of DNA into RNA using the four ribonucleoside triphosphates as substrates. The chain is DNA-directed RNA polymerase subunit alpha from Prochlorococcus marinus (strain MIT 9313).